The chain runs to 356 residues: Histidinol-phosphate aminotransferase 1 (356 aa).

The residue at position 213 (K213) is an N6-(pyridoxal phosphate)lysine.

Belongs to the class-II pyridoxal-phosphate-dependent aminotransferase family. Histidinol-phosphate aminotransferase subfamily. Homodimer. Pyridoxal 5'-phosphate serves as cofactor.

It carries out the reaction L-histidinol phosphate + 2-oxoglutarate = 3-(imidazol-4-yl)-2-oxopropyl phosphate + L-glutamate. It participates in amino-acid biosynthesis; L-histidine biosynthesis; L-histidine from 5-phospho-alpha-D-ribose 1-diphosphate: step 7/9. This chain is Histidinol-phosphate aminotransferase 1, found in Burkholderia pseudomallei (strain K96243).